Reading from the N-terminus, the 120-residue chain is Flagellar transcriptional regulator FlhD (120 aa).

The protein belongs to the FlhD family. Homodimer; disulfide-linked. Forms a heterohexamer composed of two FlhC and four FlhD subunits. Each FlhC binds a FlhD dimer, forming a heterotrimer, and a hexamer assembles by dimerization of two heterotrimers.

The protein resides in the cytoplasm. In terms of biological role, functions in complex with FlhC as a master transcriptional regulator that regulates transcription of several flagellar and non-flagellar operons by binding to their promoter region. Activates expression of class 2 flagellar genes, including fliA, which is a flagellum-specific sigma factor that turns on the class 3 genes. Also regulates genes whose products function in a variety of physiological pathways. The chain is Flagellar transcriptional regulator FlhD from Erwinia tasmaniensis (strain DSM 17950 / CFBP 7177 / CIP 109463 / NCPPB 4357 / Et1/99).